We begin with the raw amino-acid sequence, 685 residues long: Polyphosphate kinase (685 aa).

Asn-45 is an ATP binding site. Positions 375 and 405 each coordinate Mg(2+). His-435 (phosphohistidine intermediate) is an active-site residue. Tyr-468, Arg-564, and His-592 together coordinate ATP.

It belongs to the polyphosphate kinase 1 (PPK1) family. The cofactor is Mg(2+). Post-translationally, an intermediate of this reaction is the autophosphorylated ppk in which a phosphate is covalently linked to a histidine residue through a N-P bond.

The catalysed reaction is [phosphate](n) + ATP = [phosphate](n+1) + ADP. Its function is as follows. Catalyzes the reversible transfer of the terminal phosphate of ATP to form a long-chain polyphosphate (polyP). The sequence is that of Polyphosphate kinase from Neisseria gonorrhoeae (strain ATCC 700825 / FA 1090).